The chain runs to 247 residues: Ubiquinone biosynthesis O-methyltransferase (247 aa).

S-adenosyl-L-methionine-binding residues include R40, G71, D92, and M135.

Belongs to the methyltransferase superfamily. UbiG/COQ3 family.

It carries out the reaction a 3-demethylubiquinol + S-adenosyl-L-methionine = a ubiquinol + S-adenosyl-L-homocysteine + H(+). The enzyme catalyses a 3-(all-trans-polyprenyl)benzene-1,2-diol + S-adenosyl-L-methionine = a 2-methoxy-6-(all-trans-polyprenyl)phenol + S-adenosyl-L-homocysteine + H(+). Its pathway is cofactor biosynthesis; ubiquinone biosynthesis. O-methyltransferase that catalyzes the 2 O-methylation steps in the ubiquinone biosynthetic pathway. This is Ubiquinone biosynthesis O-methyltransferase from Ruegeria sp. (strain TM1040) (Silicibacter sp.).